We begin with the raw amino-acid sequence, 217 residues long: ATP synthase subunit 4, mitochondrial (217 aa).

The transit peptide at 1-14 (MPFARVGALSARHY) directs the protein to the mitochondrion. The next 2 helical transmembrane spans lie at 41-61 (GVLATGVLGSIYAISNELYIV) and 66-86 (IVLGVFAAFVVVVAKLGGPGY).

In terms of assembly, F-type ATP synthases have 2 components, the catalytic core F(1) and the membrane-embedded component F(0), linked together by a central stalk and a peripheral stalk. The central stalk, also called rotor shaft, is often seen as part of F(1). The peripheral stalk is seen as part of F(0). F(0) contains the membrane channel next to the rotor. F-type ATP synthases form dimers but each monomer functions independently in ATP generation. The dimer consists of 17 different polypeptides: ATP1 (subunit alpha, 3 molecules per monomer, part of F(1)), ATP2 (subunit beta, 3 copies per monomer, part of F(1)), ATP3 (subunit gamma, part of the central stalk), ATP4 (subunit b, part of the peripheral stalk), ATP5/OSCP (subunit 5/OSCP, part of the peripheral stalk), ATP6 (subunit a, part of the peripheral stalk), ATP7 (subunit d, part of the peripheral stalk), ATP8 (subunit 8, part of the peripheral stalk), OLI1 (subunit c, part of the rotor, 10 molecules per monomer), ATP14 (subunit h, part of the peripheral stalk), ATP15 (subunit epsilon, part of the central stalk), ATP16 (subunit delta, part of the central stalk), ATP17 (subunit f, part of the peripheral stalk), ATP18 (subunit i/j, part of the peripheral stalk), ATP19 (subunit k, dimer-specific, at interface between monomers), ATP20 (subunit g, at interface between monomers), TIM11 (subunit e, at interface between monomers).

The protein localises to the mitochondrion inner membrane. In terms of biological role, mitochondrial membrane ATP synthase (F(1)F(0) ATP synthase or Complex V) produces ATP from ADP in the presence of a proton gradient across the membrane which is generated by electron transport complexes of the respiratory chain. F-type ATP synthases consist of two structural domains, F(1) - containing the extramembraneous catalytic core, and F(0) - containing the membrane proton channel, linked together by a central stalk and a peripheral stalk. During catalysis, ATP synthesis in the catalytic domain of F(1) is coupled via a rotary mechanism of the central stalk subunits to proton translocation. Part of the complex F(0) domain and the peripheral stalk, which acts as a stator to hold the catalytic alpha/ATP1(3)beta/ATP2(3) subcomplex and subunit a/ATP6 static relative to the rotary elements. The polypeptide is ATP synthase subunit 4, mitochondrial (Yarrowia lipolytica (strain CLIB 122 / E 150) (Yeast)).